The chain runs to 211 residues: Redox-sensing transcriptional repressor Rex (211 aa).

Positions 17 to 56 form a DNA-binding region, H-T-H motif; it reads LYYRFVSSLKSKGIDRVNSKAISDALQIDSATIRRDFSYF. 91–96 lines the NAD(+) pocket; that stretch reads GVGNLG.

Belongs to the transcriptional regulatory Rex family. In terms of assembly, homodimer.

It localises to the cytoplasm. Modulates transcription in response to changes in cellular NADH/NAD(+) redox state. The sequence is that of Redox-sensing transcriptional repressor Rex from Staphylococcus aureus (strain Mu3 / ATCC 700698).